A 149-amino-acid chain; its full sequence is Nucleoside diphosphate kinase 1 (149 aa).

M1 carries the N-acetylmethionine modification. ATP contacts are provided by K9, F57, R85, T91, R102, and N112. Residue H115 is the Pros-phosphohistidine intermediate of the active site.

It belongs to the NDK family. In terms of assembly, interacts with CAT1, CAT2 and CAT3. Mg(2+) serves as cofactor.

Its subcellular location is the peroxisome. It localises to the nucleus. The protein localises to the cytoplasm. The catalysed reaction is a 2'-deoxyribonucleoside 5'-diphosphate + ATP = a 2'-deoxyribonucleoside 5'-triphosphate + ADP. It catalyses the reaction a ribonucleoside 5'-diphosphate + ATP = a ribonucleoside 5'-triphosphate + ADP. Its function is as follows. Major role in the synthesis of nucleoside triphosphates other than ATP. The ATP gamma phosphate is transferred to the NDP beta phosphate via a ping-pong mechanism, using a phosphorylated active-site intermediate. Plays a role in response to reactive oxygen species (ROS) stress. The polypeptide is Nucleoside diphosphate kinase 1 (NDK1) (Arabidopsis thaliana (Mouse-ear cress)).